Reading from the N-terminus, the 904-residue chain is Envelope glycoprotein B (904 aa).

Positions 1–22 (MRGGGLICALVVGALVAAVASA) are cleaved as a signal peptide. The Virion surface segment spans residues 23-771 (APAAPAAPRA…SGVSSFMSNP (749 aa)). The disordered stretch occupies residues 40-83 (VAANGGPASRPPPVPSPATTKARKRKTKKPPKRPEATPPPDANA). A compositionally biased stretch (basic residues) spans 60 to 70 (KARKRKTKKPP). 2 N-linked (GlcNAc...) asparagine; by host glycosylation sites follow: Asn-82 and Asn-136. Disulfide bonds link Cys-111/Cys-570, Cys-128/Cys-526, Cys-202/Cys-266, Cys-359/Cys-407, and Cys-593/Cys-630. 2 involved in fusion and/or binding to host membrane regions span residues 168–174 (VWFGHRY) and 253–260 (RVEAFHRY). N-linked (GlcNAc...) asparagine; by host glycosylation is found at Asn-393, Asn-425, and Asn-486. A disordered region spans residues 467–490 (QDRKPRNATPAPLREAPSANASVE). The N-linked (GlcNAc...) asparagine; by host glycan is linked to Asn-671. Hydrophobic membrane proximal region regions lie at residues 716-769 (IDTV…SFMS) and 728-768 (MFAG…SSFM). The helical transmembrane segment at 772 to 792 (FGALAVGLLVLAGLVAAFFAF) threads the bilayer. The Intravirion portion of the chain corresponds to 793-904 (RYVLQLQRNP…EDEAGDEDEL (112 aa)). Residues 816-835 (TSDPGGVGGEGEEGAEGGGF) form a disordered region. The Golgi targeting signature appears at 849 to 852 (YMAL). The disordered stretch occupies residues 883 to 904 (KRNKARYSPLHNEDEAGDEDEL). An Internalization motif motif is present at residues 889 to 892 (YSPL).

This sequence belongs to the herpesviridae glycoprotein B family. In terms of assembly, homotrimer; disulfide-linked. Binds to heparan sulfate proteoglycans. Interacts with gH/gL heterodimer.

It localises to the virion membrane. The protein resides in the host cell membrane. The protein localises to the host endosome membrane. Its subcellular location is the host Golgi apparatus membrane. Envelope glycoprotein that forms spikes at the surface of virion envelope. Essential for the initial attachment to heparan sulfate moieties of the host cell surface proteoglycans. Involved in fusion of viral and cellular membranes leading to virus entry into the host cell. Following initial binding to its host receptors, membrane fusion is mediated by the fusion machinery composed at least of gB and the heterodimer gH/gL. May be involved in the fusion between the virion envelope and the outer nuclear membrane during virion egress. In Homo sapiens (Human), this protein is Envelope glycoprotein B.